The following is a 362-amino-acid chain: UDP-N-acetylglucosamine--N-acetylmuramyl-(pentapeptide) pyrophosphoryl-undecaprenol N-acetylglucosamine transferase (362 aa).

Residues 14 to 16, arginine 170, serine 199, and glutamine 289 contribute to the UDP-N-acetyl-alpha-D-glucosamine site; that span reads TGG.

The protein belongs to the glycosyltransferase 28 family. MurG subfamily.

It is found in the cell inner membrane. The catalysed reaction is di-trans,octa-cis-undecaprenyl diphospho-N-acetyl-alpha-D-muramoyl-L-alanyl-D-glutamyl-meso-2,6-diaminopimeloyl-D-alanyl-D-alanine + UDP-N-acetyl-alpha-D-glucosamine = di-trans,octa-cis-undecaprenyl diphospho-[N-acetyl-alpha-D-glucosaminyl-(1-&gt;4)]-N-acetyl-alpha-D-muramoyl-L-alanyl-D-glutamyl-meso-2,6-diaminopimeloyl-D-alanyl-D-alanine + UDP + H(+). It functions in the pathway cell wall biogenesis; peptidoglycan biosynthesis. Its function is as follows. Cell wall formation. Catalyzes the transfer of a GlcNAc subunit on undecaprenyl-pyrophosphoryl-MurNAc-pentapeptide (lipid intermediate I) to form undecaprenyl-pyrophosphoryl-MurNAc-(pentapeptide)GlcNAc (lipid intermediate II). In Borrelia hermsii (strain HS1 / DAH), this protein is UDP-N-acetylglucosamine--N-acetylmuramyl-(pentapeptide) pyrophosphoryl-undecaprenol N-acetylglucosamine transferase.